A 276-amino-acid chain; its full sequence is UPF0276 protein CV_3513 (276 aa).

This sequence belongs to the UPF0276 family.

The polypeptide is UPF0276 protein CV_3513 (Chromobacterium violaceum (strain ATCC 12472 / DSM 30191 / JCM 1249 / CCUG 213 / NBRC 12614 / NCIMB 9131 / NCTC 9757 / MK)).